The primary structure comprises 630 residues: Prolactin receptor (630 aa).

Positions 1–23 (MMTKVGEVLLLLLLPAFVPHTDG) are cleaved as a signal peptide. Topologically, residues 24–234 (THYSLPGKPT…VKVPEYLHRE (211 aa)) are extracellular. Fibronectin type-III domains are found at residues 31–128 (KPTE…IVQP) and 130–230 (PPEK…VPEY). 2 disulfide bridges follow: Cys37–Cys47 and Cys76–Cys87. Residues Asn92 and Asn101 are each glycosylated (N-linked (GlcNAc...) asparagine). Asp212 and His213 together coordinate Zn(2+). Residues 216 to 220 (WSEWS) carry the WSXWS motif motif. The chain crosses the membrane as a helical span at residues 235–258 (KSVWILVLVFSAFILLLLTWLIHM). The Cytoplasmic segment spans residues 259-630 (NSHSLKHCML…DTATVFSVHT (372 aa)). The short motif at 267–275 (MLPPVPGPK) is the Box 1 motif element. Residues 339–389 (KSIGSASDSDSGRGSCDSDNLLMDKSGAPKEEQQQQNQEGDQIGKETQGPK) are disordered. Over residues 340 to 357 (SIGSASDSDSGRGSCDSD) the composition is skewed to low complexity. Basic and acidic residues predominate over residues 380–389 (QIGKETQGPK).

The protein belongs to the type I cytokine receptor family. Type 1 subfamily.

Its subcellular location is the membrane. This is a receptor for the anterior pituitary hormone prolactin. This Oreochromis niloticus (Nile tilapia) protein is Prolactin receptor (prlr).